The sequence spans 669 residues: Translation factor GUF1, mitochondrial (669 aa).

A mitochondrion-targeting transit peptide spans 1 to 49 (MWTLVGRGWGCARALAPRATGAALLVAPGPRSAPTLGAAPESWATDRLY). In terms of domain architecture, tr-type G spans 66–247 (ENIRNFSIVA…AIIERIPPPK (182 aa)). GTP is bound by residues 75 to 82 (AHVDHGKS), 140 to 144 (DTPGH), and 194 to 197 (NKID).

It belongs to the TRAFAC class translation factor GTPase superfamily. Classic translation factor GTPase family. LepA subfamily.

It is found in the mitochondrion inner membrane. It catalyses the reaction GTP + H2O = GDP + phosphate + H(+). Its function is as follows. Promotes mitochondrial protein synthesis. May act as a fidelity factor of the translation reaction, by catalyzing a one-codon backward translocation of tRNAs on improperly translocated ribosomes. Binds to mitochondrial ribosomes in a GTP-dependent manner. This Homo sapiens (Human) protein is Translation factor GUF1, mitochondrial.